Reading from the N-terminus, the 749-residue chain is Basic juvenile hormone-suppressible protein 2 (749 aa).

An N-terminal signal peptide occupies residues 1 to 14 (MRAVLLFVVSLAAL).

Belongs to the hemocyanin family. As to expression, fat body, and hemolymph of larvae.

The chain is Basic juvenile hormone-suppressible protein 2 (BJSP-2) from Trichoplusia ni (Cabbage looper).